Reading from the N-terminus, the 738-residue chain is Catalase-peroxidase 2 (738 aa).

Positions 1 to 26 (MKRTLPTLSALALSMSLALAAGQTQA) are cleaved as a signal peptide. Positions 104–226 (WHSAGVYRIF…LGATQMGLIY (123 aa)) form a cross-link, tryptophyl-tyrosyl-methioninium (Trp-Tyr) (with M-252). H105 acts as the Proton acceptor in catalysis. Residues 226-252 (YVNPEGPNGVPDPLAAARDIRETFGRM) constitute a cross-link (tryptophyl-tyrosyl-methioninium (Tyr-Met) (with W-104)). H267 is a heme b binding site.

The protein belongs to the peroxidase family. Peroxidase/catalase subfamily. As to quaternary structure, homodimer or homotetramer. Heme b is required as a cofactor. In terms of processing, formation of the three residue Trp-Tyr-Met cross-link is important for the catalase, but not the peroxidase activity of the enzyme.

It carries out the reaction H2O2 + AH2 = A + 2 H2O. It catalyses the reaction 2 H2O2 = O2 + 2 H2O. Bifunctional enzyme with both catalase and broad-spectrum peroxidase activity. The chain is Catalase-peroxidase 2 from Shewanella amazonensis (strain ATCC BAA-1098 / SB2B).